The chain runs to 247 residues: Probable transcriptional regulatory protein TDE_1487 (247 aa).

The protein belongs to the TACO1 family.

It localises to the cytoplasm. This Treponema denticola (strain ATCC 35405 / DSM 14222 / CIP 103919 / JCM 8153 / KCTC 15104) protein is Probable transcriptional regulatory protein TDE_1487.